Here is a 593-residue protein sequence, read N- to C-terminus: Brain-enriched guanylate kinase-associated protein (593 aa).

The residue at position 1 (methionine 1) is an N-acetylmethionine. Tyrosine 137 carries the phosphotyrosine modification. A phosphoserine mark is found at serine 200, serine 229, serine 246, serine 265, serine 346, and serine 373. Arginine 381 carries the asymmetric dimethylarginine modification. Phosphoserine occurs at positions 455, 465, 475, 477, 500, 502, 506, 553, and 563. The tract at residues 499–593 (LSLSPGRSAD…KAQLYGTLLN (95 aa)) is disordered.

In terms of assembly, interacts with DLG4 and DLGAP1 and forms a ternary complex.

Its subcellular location is the cytoplasm. The protein localises to the membrane. In terms of biological role, may sustain the structure of the postsynaptic density (PSD). In Homo sapiens (Human), this protein is Brain-enriched guanylate kinase-associated protein (BEGAIN).